The primary structure comprises 241 residues: MVTHTKPIYRRIVLKMSGEALQGAEGFGIDTTILNRMVTEVKELVKIGIQIGIVMGGGNLFRGAELVKSGMNRIVGDHIGMLATIMNGLAMRSALNHAYVHSHLMSAIPLNGVCDHYNWMKAINLLSNNWVVIFAAGTGNPLFTTDSAACLRGIEIKADVVLKATKVDGVFSTDPIQHPDATLYEQLSYQDVLERELKVMDLTAFTLAREHNLPIRIFNINKLGALKRIIMGYKEGTLITK.

Residue 15 to 18 (KMSG) participates in ATP binding. Positions 23–28 (GAEGFG) are involved in allosteric activation by GTP. Gly57 is a UMP binding site. Gly58 and Arg62 together coordinate ATP. UMP-binding positions include Asp77 and 138 to 145 (TGNPLFTT). Thr165, Phe171, and Asp174 together coordinate ATP.

Belongs to the UMP kinase family. As to quaternary structure, homohexamer.

The protein localises to the cytoplasm. It catalyses the reaction UMP + ATP = UDP + ADP. It functions in the pathway pyrimidine metabolism; CTP biosynthesis via de novo pathway; UDP from UMP (UMPK route): step 1/1. With respect to regulation, allosterically activated by GTP. Inhibited by UTP. Functionally, catalyzes the reversible phosphorylation of UMP to UDP. This Blochmanniella pennsylvanica (strain BPEN) protein is Uridylate kinase.